A 668-amino-acid polypeptide reads, in one-letter code: Protein ENTREP3 (668 aa).

3 consecutive transmembrane segments (helical) span residues 34–54 (LLTLGLVQVLLGILVVTFSMV), 67–87 (SCPSWAGFSLAFSGVVGIVSW), and 91–111 (FTLVISFFSLLSVLCVMLSMA). Asn160 carries an N-linked (GlcNAc...) asparagine glycan. The chain crosses the membrane as a helical span at residues 174–194 (LFSVCGLTICAAIICTLSAIV). A phosphoserine mark is found at Ser358 and Ser389. Disordered stretches follow at residues 386-419 (FEESPLPRRPPRAARSYSCSAPEAPPPLGAPTAA), 442-503 (RVPR…SSDT), and 550-570 (SAEKRRPVPTFQKVPLPSGPA). Low complexity predominate over residues 398 to 407 (AARSYSCSAP). Residue Ser493 is modified to Phosphoserine. Position 574 is a phosphoserine (Ser574). 2 disordered regions span residues 597-620 (KAPDPSGTGAHGHKQVPRSLWGRP) and 645-668 (GRRLERGTRPHSLSLNGGSRETGL). A compositionally biased stretch (polar residues) spans 655–668 (HSLSLNGGSRETGL).

The protein belongs to the ENTREP family. As to quaternary structure, may interact with WWOX. In terms of tissue distribution, widely expressed.

The protein resides in the membrane. This is Protein ENTREP3 from Homo sapiens (Human).